A 123-amino-acid chain; its full sequence is Large ribosomal subunit protein uL29 (123 aa).

Belongs to the universal ribosomal protein uL29 family.

The sequence is that of Large ribosomal subunit protein uL29 (RPL35) from Babesia bovis.